The following is a 214-amino-acid chain: Cytolysin tenebrosin-B (214 aa).

An N-terminal signal peptide occupies residues 1–19; the sequence is MNRLIIVFIVVTMICAATA. Positions 20-35 are excised as a propeptide; it reads LSTKRRINKEEKDEKR. The plays an important role in the hemolytic activity stretch occupies residues 38–47; the sequence is AVAGAVIEGA. Residues 46-65 are N-terminal region; the sequence is GATLTFNVLQTVLKALGDIS. The phosphocholine site is built by serine 89, valine 122, serine 140, proline 142, tyrosine 168, tyrosine 172, and tyrosine 173. The tract at residues 140–155 is trp-rich region, which is important for the binding to lipid membrane; it reads SIPFDYNLYSNWWNVK. Residues 179 to 181 carry the Cell attachment site, crucial for protein stability motif; sequence RGD.

It belongs to the actinoporin family. Sea anemone subfamily. As to quaternary structure, octamer or nonamer in membranes. Monomer in the soluble state.

It localises to the secreted. The protein localises to the nematocyst. The protein resides in the target cell membrane. Functionally, pore-forming protein that forms cations-selective hydrophilic pores of around 1 nm and causes cardiac stimulation and cytolysis. Pore formation is a multi-step process that involves specific recognition of membrane sphingomyelin (but neither cholesterol nor phosphatidylcholine) using aromatic rich region and adjacent phosphocholine (POC) binding site, firm binding to the membrane (mainly driven by hydrophobic interactions) accompanied by the transfer of the N-terminal region to the lipid-water interface and finally pore formation after oligomerization of monomers. The chain is Cytolysin tenebrosin-B from Actinia tenebrosa (Australian red waratah sea anemone).